A 565-amino-acid polypeptide reads, in one-letter code: Receptor-like serine/threonine-protein kinase NCRK (565 aa).

The N-terminal stretch at 1–23 (MKMRVETALAILLVLISIQQCYG) is a signal peptide. Residues 24 to 103 (GVSNYTCTCF…SKKQYLSRKL (80 aa)) lie on the Extracellular side of the membrane. Asn-27, Asn-37, Asn-45, Asn-77, and Asn-85 each carry an N-linked (GlcNAc...) asparagine glycan. Residues 104–124 (VIVILLFCGVLISLAFLASMI) traverse the membrane as a helical segment. The Cytoplasmic portion of the chain corresponds to 125-565 (CYICRKDKFS…PVLLEPSAHI (441 aa)). The Protein kinase domain maps to 210–495 (FSSNSVIGHG…REVVQILSTI (286 aa)). ATP contacts are provided by residues 216–224 (IGHGGSSCV) and Lys-238. Asp-339 serves as the catalytic Proton acceptor. Phosphothreonine occurs at positions 378 and 383. Tyr-391 carries the post-translational modification Phosphotyrosine.

This sequence belongs to the protein kinase superfamily. Ser/Thr protein kinase family. Interacts with ARAC5. In terms of processing, phosphorylated. Mostly expressed in leaf primordia, root and shoot apical meristems, lateral root primordia, and stele of older roots and hypocotyls. In leaves and cotyledons, highest levels observed in trichomes, vasculatures, and hydathode endothem.

It localises to the cell membrane. It is found in the prevacuolar compartment membrane. Its subcellular location is the endosome. The enzyme catalyses L-seryl-[protein] + ATP = O-phospho-L-seryl-[protein] + ADP + H(+). It catalyses the reaction L-threonyl-[protein] + ATP = O-phospho-L-threonyl-[protein] + ADP + H(+). The polypeptide is Receptor-like serine/threonine-protein kinase NCRK (NCRK) (Arabidopsis thaliana (Mouse-ear cress)).